A 734-amino-acid chain; its full sequence is MKKPLNSAEEKKTGDITKAEIEAIKSGLHSNPFQIIPLHETPEGFSARCFIPGAEEVSVLTLDGNFVGELKQIDPDGFFEGRIDLSKRQPVRYRACRDDAEWAVTDPYSFGPVLGPMDDYFVREGSICGYSTGWARIPLKLEGVEGFHFAVWAPNGRRVSVVGDFNNWDGRRHVMRFRKDTGIWEIFAPDVYACAYKFEILGANGELLPLKADPYARRGELRPKNASVTAPELTQKWEDQAHREHWAQVDQRRQPISIYEVHAGSWQRSEDGTFLSWDELEAQLIPYCTDMGFTHIEFLPITEHPYDPSWGYQTTGLYAPTARFGDPEGFARFVNGAHKVGIGVLLDWVPAHFPTDEHGLRWFDGTALYEHADPRQGFHPDWNTAIYNFGRIEVMSYLINNALYWAEKFHLDGLRVDAVASMLYLDYSRKEGEWIPNEYGGRENLESVRFLQKMNSLVYGTHPGVMTIAEESTSWPKVSQPVHEGGLGFGFKWNMGFMHDTLSYFSREPVHRKFHHQELTFGLLYAFTENFVLPLSHDEVVHGKGSLIAKMSGDDWQKFANLRSYYGFMWGYPGKKLLFMGQEFAQWSEWSEKGSLDWNLRQYPMHEGMRRLVRDLNLTYRSKAALHARDCEPDGFRWLVVDDHENSVFAWLRTAPGEKPVAVICNLTPVYRENYYVPLGVAGRWREILNTDAEIYGGSGKGNGGRVQAVDAGGEIGAMLVLPPLATIMLEPEN.

The Nucleophile role is filled by Asp-417. Glu-470 serves as the catalytic Proton donor.

The protein belongs to the glycosyl hydrolase 13 family. GlgB subfamily. As to quaternary structure, monomer.

It carries out the reaction Transfers a segment of a (1-&gt;4)-alpha-D-glucan chain to a primary hydroxy group in a similar glucan chain.. It participates in glycan biosynthesis; glycogen biosynthesis. Catalyzes the formation of the alpha-1,6-glucosidic linkages in glycogen by scission of a 1,4-alpha-linked oligosaccharide from growing alpha-1,4-glucan chains and the subsequent attachment of the oligosaccharide to the alpha-1,6 position. This chain is 1,4-alpha-glucan branching enzyme GlgB (glgB), found in Rhizobium radiobacter (Agrobacterium tumefaciens).